Reading from the N-terminus, the 417-residue chain is Lissencephaly-1 homolog (417 aa).

Positions 7-39 (QKEELNRAIADYLFANGYVKALNAFREESQLAG) constitute a LisH domain. Positions 54–86 (TSVIRLQKKVMDLEAKLNEAEKEFQSMQNAIGF) form a coiled coil. WD repeat units follow at residues 120–159 (GHRSPITRVLFHPHYNVFVSASEDASIKVWDYETGEFEHT), 162–203 (GHTD…KTLT), 204–243 (GHDHNVSSVAFLPSGDFLVSASRDKTIKMWEVSTGYCTKT), 246–285 (GHTEWIRSVRPSPEGNLLASCSNDHTIRIWSVESRECQVV), 288–340 (GHEH…CLFV), 343–382 (GHDNWVRQLVFHPHGRLLLSASDDKTIRVWDLKNRRCHKT), and 385–417 (AHSHFVTSLDVNRLAPYAITGSVDQTIHIWDCR).

It belongs to the WD repeat LIS1/nudF family.

It localises to the cytoplasm. Its subcellular location is the cytoskeleton. It is found in the microtubule organizing center. The protein localises to the centrosome. Its function is as follows. Positively regulates the activity of the minus-end directed microtubule motor protein dynein. May enhance dynein-mediated microtubule sliding by targeting dynein to the microtubule plus end. Required for several dynein- and microtubule-dependent processes. In Schistosoma mansoni (Blood fluke), this protein is Lissencephaly-1 homolog.